A 169-amino-acid chain; its full sequence is Crossover junction endodeoxyribonuclease RuvC (169 aa).

Active-site residues include Asp-15, Glu-75, and Asp-147. Positions 15, 75, and 147 each coordinate Mg(2+).

It belongs to the RuvC family. Homodimer which binds Holliday junction (HJ) DNA. The HJ becomes 2-fold symmetrical on binding to RuvC with unstacked arms; it has a different conformation from HJ DNA in complex with RuvA. In the full resolvosome a probable DNA-RuvA(4)-RuvB(12)-RuvC(2) complex forms which resolves the HJ. It depends on Mg(2+) as a cofactor.

The protein localises to the cytoplasm. It catalyses the reaction Endonucleolytic cleavage at a junction such as a reciprocal single-stranded crossover between two homologous DNA duplexes (Holliday junction).. In terms of biological role, the RuvA-RuvB-RuvC complex processes Holliday junction (HJ) DNA during genetic recombination and DNA repair. Endonuclease that resolves HJ intermediates. Cleaves cruciform DNA by making single-stranded nicks across the HJ at symmetrical positions within the homologous arms, yielding a 5'-phosphate and a 3'-hydroxyl group; requires a central core of homology in the junction. The consensus cleavage sequence is 5'-(A/T)TT(C/G)-3'. Cleavage occurs on the 3'-side of the TT dinucleotide at the point of strand exchange. HJ branch migration catalyzed by RuvA-RuvB allows RuvC to scan DNA until it finds its consensus sequence, where it cleaves and resolves the cruciform DNA. The protein is Crossover junction endodeoxyribonuclease RuvC of Caulobacter sp. (strain K31).